The primary structure comprises 550 residues: Hydroxylamine reductase (550 aa).

Cys3, Cys6, Cys18, and Cys25 together coordinate [2Fe-2S] cluster. Residues His249, Glu273, Cys317, Cys405, Cys433, Cys458, Glu492, and Lys494 each contribute to the hybrid [4Fe-2O-2S] cluster site. Cys405 bears the Cysteine persulfide mark.

It belongs to the HCP family. [2Fe-2S] cluster serves as cofactor. It depends on hybrid [4Fe-2O-2S] cluster as a cofactor.

The protein localises to the cytoplasm. It catalyses the reaction A + NH4(+) + H2O = hydroxylamine + AH2 + H(+). Inhibited by oxygen. Activated by cyanide except in the prolonged presence of excess cyanide, where the enzyme is inactivated. Catalyzes the reduction of hydroxylamine to form NH(3) and H(2)O. Is also able to reduce hydroxylamine analogs such as methylhydroxylamine and hydroxyquinone. Might have a role as a scavenger of potentially toxic by-products of nitrate metabolism. This is Hydroxylamine reductase from Escherichia coli (strain K12).